A 690-amino-acid chain; its full sequence is Glycine--tRNA ligase beta subunit (690 aa).

The protein belongs to the class-II aminoacyl-tRNA synthetase family. As to quaternary structure, tetramer of two alpha and two beta subunits.

The protein localises to the cytoplasm. The catalysed reaction is tRNA(Gly) + glycine + ATP = glycyl-tRNA(Gly) + AMP + diphosphate. This is Glycine--tRNA ligase beta subunit from Pediococcus pentosaceus (strain ATCC 25745 / CCUG 21536 / LMG 10740 / 183-1w).